Consider the following 259-residue polypeptide: MTGFGSPCGACKFLRRKCVRGCVFAPYFCHEQGAAHFAAIHKVFGASNVSKLLAHLPLADRPEAAVTISYEAQARLRDPIYGCVAHIFALQQQVMTLQAQLASLKAAAAQGIHHQDVGATTKGGYMSAAATAADDQLGYGGYNQWCGSNGGGAPAASQPGAYSSNGGAGHGHDSITALLAAGSDYMQHSLYHAFEHSEGAGAVDDGHAAAAAFEAAAESSSCGMAASFAADESVWRSSSSGYQDCEDLQSVAYAYLNRS.

In terms of domain architecture, LOB spans 6 to 108 (SPCGACKFLR…AQLASLKAAA (103 aa)).

Belongs to the LOB domain-containing protein family. As to quaternary structure, can form homodimers. Expressed in unelongating basal internodes, at the base of shoot in parenchyma cells adjacent to the peripheral vascular cylinder of the stem, and root pericycle cells. Expressed in lateral and adventitious root primordia, tiller primordia, vascular tissues, scutellum, and young pedicels.

The protein resides in the nucleus. Its function is as follows. Acts as a positive regulator of adventitious (crown) root formation by promoting its initiation. Acts as a positive regulator of lateral root formation. Regulated by the auxin response factor and transcriptional activator ARF23/ARF1. Involved in auxin-mediated cell dedifferentiation, and may promote the initial cell division in the pericycle cells adjacent to the peripheral vascular cylinder at the base of the stem. May act upstream of the gene regulatory network controlling adventitious root (crown) development. The sequence is that of LOB domain-containing protein CRL1 from Oryza sativa subsp. japonica (Rice).